The primary structure comprises 773 residues: ATP-dependent permease MDL2, mitochondrial (773 aa).

A mitochondrion-targeting transit peptide spans 1-90 (MLNGRLPLLR…SPISKGSARS (90 aa)). A compositionally biased stretch (polar residues) spans 73–84 (PETSLPSASPIS). Positions 73–95 (PETSLPSASPISKGSARSAHAKE) are disordered. Residues 119–413 (LLTAILLLTI…LSTFYSEIMQ (295 aa)) enclose the ABC transmembrane type-1 domain. The next 3 helical transmembrane spans lie at 123–143 (ILLL…IGIV), 170–192 (FLSF…FILL), and 257–277 (VVGV…LLFF). 481-488 (GPSGRGKS) contacts ATP. The region spanning 493–733 (LLLRYYNPTT…DDNDNNHDND (241 aa)) is the ABC transporter domain. Basic and acidic residues-rich tracts occupy residues 706 to 733 (KEDL…HDND) and 740 to 762 (ETKD…DAAK). The segment at 706–773 (KEDLNESKEH…ANPIKITPQP (68 aa)) is disordered.

The protein belongs to the ABC transporter superfamily. ABCB family. Mitochondrial peptide exporter (TC 3.A.1.212) subfamily.

The protein localises to the mitochondrion inner membrane. In Saccharomyces cerevisiae (strain ATCC 204508 / S288c) (Baker's yeast), this protein is ATP-dependent permease MDL2, mitochondrial (MDL2).